A 364-amino-acid chain; its full sequence is Long-wave-sensitive opsin 1 (364 aa).

The Extracellular segment spans residues 1–52 (MAQRWGPQKLAGGQPQAGFEDSTQASIFTYTNNNATRDPFEGPNYHIAPRWV). Residue Ser22 is glycosylated (O-linked (GlcNAc) serine). N-linked (GlcNAc...) asparagine glycosylation is present at Asn34. A helical membrane pass occupies residues 53-77 (YHVTSAWMIFVVIASVFTNGLVLAA). At 78–89 (TMRFKKLRHPLN) the chain is on the cytoplasmic side. Residues 90 to 115 (WILVNLAVADLAETIIASTISVVNQI) form a helical membrane-spanning segment. Residues 116–129 (YGYFVLGHPMCVVE) lie on the Extracellular side of the membrane. The cysteines at positions 126 and 203 are disulfide-linked. Residues 130-149 (GYTVSLCGITGLWSLAIISW) form a helical membrane-spanning segment. The Cytoplasmic segment spans residues 150-168 (ERWMVVCKPFGNVRFDAKL). A helical membrane pass occupies residues 169–192 (AVAGIAFSWIWAAVWTAPPIFGWS). Residues 193 to 218 (RYWPHGLKTSCGPDVFSGSSYPGVQS) are Extracellular-facing. Residues 219–246 (YMIVLMITCCIIPLSVIVLCYLQVWLAI) form a helical membrane-spanning segment. Topologically, residues 247-268 (RAVAKQQKESESTQKAEKEVTR) are cytoplasmic. A helical transmembrane segment spans residues 269–292 (MVMVMVFAFCLCWGPYTFFACFAA). The Extracellular segment spans residues 293 to 300 (AHPGYAFH). The chain crosses the membrane as a helical span at residues 301–325 (PLVAALPAYFAKSATIYNPIIYVFM). At Lys312 the chain carries N6-(retinylidene)lysine. Residues 326 to 364 (NRQFRNCILQLFGKKVDDSSELSSVSKTEASSVSSVSPA) are Cytoplasmic-facing.

The protein belongs to the G-protein coupled receptor 1 family. Opsin subfamily. In terms of processing, phosphorylated on some or all of the serine and threonine residues present in the C-terminal region. As to expression, the three color pigments are found in the cone photoreceptor cells. Expressed in retina.

The protein localises to the membrane. Visual pigments are the light-absorbing molecules that mediate vision. They consist of an apoprotein, opsin, covalently linked to cis-retinal. This chain is Long-wave-sensitive opsin 1 (OPN1LW), found in Equus caballus (Horse).